Consider the following 487-residue polypeptide: Aspartyl/glutamyl-tRNA(Asn/Gln) amidotransferase subunit B (487 aa).

It belongs to the GatB/GatE family. GatB subfamily. In terms of assembly, heterotrimer of A, B and C subunits.

The catalysed reaction is L-glutamyl-tRNA(Gln) + L-glutamine + ATP + H2O = L-glutaminyl-tRNA(Gln) + L-glutamate + ADP + phosphate + H(+). It catalyses the reaction L-aspartyl-tRNA(Asn) + L-glutamine + ATP + H2O = L-asparaginyl-tRNA(Asn) + L-glutamate + ADP + phosphate + 2 H(+). Its function is as follows. Allows the formation of correctly charged Asn-tRNA(Asn) or Gln-tRNA(Gln) through the transamidation of misacylated Asp-tRNA(Asn) or Glu-tRNA(Gln) in organisms which lack either or both of asparaginyl-tRNA or glutaminyl-tRNA synthetases. The reaction takes place in the presence of glutamine and ATP through an activated phospho-Asp-tRNA(Asn) or phospho-Glu-tRNA(Gln). In Acidiphilium cryptum (strain JF-5), this protein is Aspartyl/glutamyl-tRNA(Asn/Gln) amidotransferase subunit B.